A 463-amino-acid chain; its full sequence is RuvB-like 2 (463 aa).

An N-acetylalanine modification is found at alanine 2. A Glycyl lysine isopeptide (Lys-Gly) (interchain with G-Cter in SUMO2) cross-link involves residue lysine 9. Residue 77-84 (GQPGTGKT) coordinates ATP. Serine 437 carries the phosphoserine modification. Glycyl lysine isopeptide (Lys-Gly) (interchain with G-Cter in SUMO2) cross-links involve residues lysine 444 and lysine 456.

This sequence belongs to the RuvB family. Forms homohexameric rings. Can form a dodecamer with RUVBL1 made of two stacked hexameric rings; however, even though RUVBL1 and RUVBL2 are present in equimolar ratio, the oligomeric status of each hexamer is not known. Oligomerization may regulate binding to nucleic acids and conversely, binding to nucleic acids may affect the dodecameric assembly. Interaction of the complex with DHX34 results in conformational changes of the N-terminus of the RUVBL2 subunits, resulting in loss of nucleotide binding ability and ATP hydrolysis of the complex. Interacts with the transcriptional activation domain of MYC. Interacts with ATF2. Component of the RNA polymerase II holoenzyme complex. May also act to bridge the LEF1/TCF1-CTNNB1 complex and TBP. Component of the NuA4 histone acetyltransferase complex which contains the catalytic subunit KAT5/TIP60 and the subunits EP400, TRRAP/PAF400, BRD8/SMAP, EPC1, DMAP1/DNMAP1, RUVBL1/TIP49, RUVBL2, ING3, actin, ACTL6A/BAF53A, MORF4L1/MRG15, MORF4L2/MRGX, MRGBP, YEATS4/GAS41, VPS72/YL1 and MEAF6. The NuA4 complex interacts with MYC and the adenovirus E1A protein. RUVBL2 interacts with EP400. Component of a NuA4-related complex which contains EP400, TRRAP/PAF400, SRCAP, BRD8/SMAP, EPC1, DMAP1/DNMAP1, RUVBL1/TIP49, RUVBL2, actin, ACTL6A/BAF53A, VPS72 and YEATS4/GAS41. Interacts with NPAT. Component of the chromatin-remodeling INO80 complex; specifically part of a complex module associated with the helicase ATP-binding and the helicase C-terminal domain of INO80. Component of some MLL1/MLL complex, at least composed of the core components KMT2A/MLL1, ASH2L, HCFC1/HCF1, WDR5 and RBBP5, as well as the facultative components BACC1, CHD8, E2F6, HSP70, INO80C, KANSL1, LAS1L, MAX, MCRS1, MGA, MYST1/MOF, PELP1, PHF20, PRP31, RING2, RUVB1/TIP49A, RUVB2/TIP49B, SENP3, TAF1, TAF4, TAF6, TAF7, TAF9 and TEX10. Interacts with IGHMBP2. Interacts with TELO2. Interacts with HINT1. Component of a SWR1-like complex. Component of the R2TP complex composed at least of RUVBL1, RUVBL2, RPAP3 and PIHD1. Component of the PAQosome complex which is responsible for the biogenesis of several protein complexes and which consists of R2TP complex members RUVBL1, RUVBL2, RPAP3 and PIH1D1, URI complex members PFDN2, PFDN6, PDRG1, UXT and URI1 as well as ASDURF, POLR2E and DNAAF10/WDR92. Interacts with ITFG1. Interacts with ZMYND10. Interacts with WAC; WAC positively regulates MTOR activity by promoting the assembly of the TTT complex composed of TELO2, TTI1 and TTI2 and the RUVBL complex composed of RUVBL1 and RUVBL2 into the TTT-RUVBL complex which leads to the dimerization of the mTORC1 complex and its subsequent activation. Forms a complex with APPL1 and APPL2. Interacts with ZNHIT2 (via HIT-type zinc finger) in the presence of ATP or ADP; shows a stronger interaction in the presence of ADP. The RUVBL1/RUVBL2 complex interacts with ZNHIT1 (via HIT-type zinc finger), ZNHIT3 (via HIT-type zinc finger), ZNHIT6 (via HIT-type zinc finger) and DDX59/ZNHIT5 (via HIT-type zinc finger) in the presence of ADP. Interacts with NOPCHAP1; the interaction is direct and disrupted upon ATP binding. Interacts with SMG1. In terms of assembly, (Microbial infection) Interacts with Mumps L polymerase; this interaction regulates the viral transcription. Ubiquitously expressed. Highly expressed in testis and thymus.

Its subcellular location is the nucleus matrix. The protein resides in the nucleus. The protein localises to the nucleoplasm. It is found in the cytoplasm. It localises to the membrane. Its subcellular location is the dynein axonemal particle. The enzyme catalyses ATP + H2O = ADP + phosphate + H(+). In terms of biological role, possesses single-stranded DNA-stimulated ATPase and ATP-dependent DNA helicase (5' to 3') activity; hexamerization is thought to be critical for ATP hydrolysis and adjacent subunits in the ring-like structure contribute to the ATPase activity. Component of the NuA4 histone acetyltransferase complex which is involved in transcriptional activation of select genes principally by acetylation of nucleosomal histones H4 and H2A. This modification may both alter nucleosome -DNA interactions and promote interaction of the modified histones with other proteins which positively regulate transcription. This complex may be required for the activation of transcriptional programs associated with oncogene and proto-oncogene mediated growth induction, tumor suppressor mediated growth arrest and replicative senescence, apoptosis, and DNA repair. The NuA4 complex ATPase and helicase activities seem to be, at least in part, contributed by the association of RUVBL1 and RUVBL2 with EP400. NuA4 may also play a direct role in DNA repair when recruited to sites of DNA damage. Component of a SWR1-like complex that specifically mediates the removal of histone H2A.Z/H2AZ1 from the nucleosome. Proposed core component of the chromatin remodeling INO80 complex which exhibits DNA- and nucleosome-activated ATPase activity and catalyzes ATP-dependent nucleosome sliding. Plays an essential role in oncogenic transformation by MYC and also modulates transcriptional activation by the LEF1/TCF1-CTNNB1 complex. May also inhibit the transcriptional activity of ATF2. Involved in the endoplasmic reticulum (ER)-associated degradation (ERAD) pathway where it negatively regulates expression of ER stress response genes. May play a role in regulating the composition of the U5 snRNP complex. The polypeptide is RuvB-like 2 (RUVBL2) (Homo sapiens (Human)).